A 440-amino-acid polypeptide reads, in one-letter code: Enolase 1 (440 aa).

Substrate contacts are provided by His-161 and Glu-170. Glu-213 functions as the Proton donor in the catalytic mechanism. Mg(2+) is bound by residues Asp-248, Glu-297, and Asp-324. Glu-297 and Asp-324 together coordinate substrate. Catalysis depends on Lys-349, which acts as the Proton acceptor. Substrate contacts are provided by residues Ser-376 to Ser-379 and Lys-400.

This sequence belongs to the enolase family. In terms of assembly, homodimer. Mg(2+) serves as cofactor.

The protein resides in the cytoplasm. The enzyme catalyses (2R)-2-phosphoglycerate = phosphoenolpyruvate + H2O. Its pathway is carbohydrate degradation; glycolysis; pyruvate from D-glyceraldehyde 3-phosphate: step 4/5. This is Enolase 1 (ENO1) from Candida albicans (strain SC5314 / ATCC MYA-2876) (Yeast).